The sequence spans 288 residues: Elongation factor Ts (288 aa).

Residues threonine 82–valine 85 form an involved in Mg(2+) ion dislocation from EF-Tu region.

The protein belongs to the EF-Ts family.

It is found in the cytoplasm. Associates with the EF-Tu.GDP complex and induces the exchange of GDP to GTP. It remains bound to the aminoacyl-tRNA.EF-Tu.GTP complex up to the GTP hydrolysis stage on the ribosome. The chain is Elongation factor Ts from Pelodictyon phaeoclathratiforme (strain DSM 5477 / BU-1).